Here is a 357-residue protein sequence, read N- to C-terminus: DENN domain-containing protein 10 (357 aa).

Residues 1–136 (MAAVVAMDTQ…IAVLTKGICQ (136 aa)) form the uDENN domain. The cDENN domain maps to 152–299 (KAYLAGSIKD…PEKSDSQVIQ (148 aa)). One can recognise a dDENN domain in the interval 301-357 (IALKTKEIFTHLAPFSEVSDDGGKVILNVEALKQQRFPPATENFLYHLAAAEQMLKV).

It belongs to the DENND10 family. As to quaternary structure, interacts with the coiled-coil heterodimer of CCDC22 and CCDC93; the interaction is direct. Interacts with RAB27A and RAB27B (GDP-bound forms preferentially).

It localises to the late endosome. In terms of biological role, guanine nucleotide exchange factor (GEF) regulating homeostasis of late endocytic pathway, including endosomal positioning, maturation and secretion, possibly through activating Rab proteins such as RAB27A and RAB27B. Promotes the exchange of GDP to GTP, converting inactive GDP-bound RAB27A and RAB27B into their active GTP-bound form. This Mus musculus (Mouse) protein is DENN domain-containing protein 10.